The primary structure comprises 821 residues: uncharacterized protein (821 aa).

10 disordered regions span residues 1–20 (MGQT…TTSS), 55–96 (SENY…EAYS), 134–205 (SYDF…NNEH), 240–263 (RLHQ…RSSW), 274–293 (PEEF…TPLN), 360–381 (NVLQ…ESNS), 430–450 (TSED…NESR), 467–497 (EFST…SQAF), 512–535 (RNLF…NQPT), and 549–641 (AQEP…SNQT). 2 stretches are compositionally biased toward polar residues: residues 58-88 (YADT…CSTQ) and 185-203 (SLPS…SINN). Polar residues predominate over residues 279–293 (NASNPEAHSNFTPLN). A compositionally biased stretch (polar residues) spans 437–450 (TMTQENQSLHNESR). Low complexity-rich tracts occupy residues 517–529 (TSNS…SSFS) and 568–578 (SSLLDSSNSNS). The span at 579–622 (QRPFSTVPSESNVFSRNASGNFSMSQTHQPTTDNTSSFSTQPGR) shows a compositional bias: polar residues. Residues 766-809 (CLICLETYTNGDICRKLQACKHFFHQACIDQWLTTGNNSCPLCR) form an RING-type; atypical zinc finger.

This is an uncharacterized protein from Schizosaccharomyces pombe (strain 972 / ATCC 24843) (Fission yeast).